Here is a 319-residue protein sequence, read N- to C-terminus: Mitochondrial fission regulator 1-like-A (319 aa).

Residues 1–37 are disordered; that stretch reads MASLGAAAEPERNLFGKDEAEAYESPEGRRSGRKKRT. Residues 9-30 are compositionally biased toward basic and acidic residues; the sequence is EPERNLFGKDEAEAYESPEGRR.

Belongs to the MTFR1 family.

It localises to the mitochondrion outer membrane. Mitochondrial protein required for adaptation of miochondrial dynamics to metabolic changes. Regulates mitochondrial morphology at steady state and mediates AMPK-dependent stress-induced mitochondrial fragmentation via the control of OPA1 levels. The sequence is that of Mitochondrial fission regulator 1-like-A (mtfr1l-a) from Xenopus laevis (African clawed frog).